Reading from the N-terminus, the 56-residue chain is Putative 2-Cys peroxiredoxin BAS1 (56 aa).

The protein belongs to the peroxiredoxin family. AhpC/Prx1 subfamily. As to quaternary structure, homodimer; disulfide-linked, upon oxidation.

It is found in the plastid. The protein localises to the chloroplast. The catalysed reaction is a hydroperoxide + [thioredoxin]-dithiol = an alcohol + [thioredoxin]-disulfide + H2O. Its function is as follows. Thiol-specific peroxidase that catalyzes the reduction of hydrogen peroxide and organic hydroperoxides to water and alcohols, respectively. Plays a role in cell protection against oxidative stress by detoxifying peroxides. May be an antioxidant enzyme particularly in the developing shoot and photosynthesizing leaf. This is Putative 2-Cys peroxiredoxin BAS1 from Pinus strobus (Eastern white pine).